The following is an 822-amino-acid chain: MVLVCASSSKCKRNTFLQLAMVLFAVVMARIALYFHNHLDEPLVDPYDANGNPQFSEANALKHVIHLSDDIGYRILGTIEQERAREYIMNEVLALQKQLQDGPNADIHQMEVSLESGDGAHRFDFMNKYVIKKYQNLKNIVVRLSNGTEACKEEAVLINAHVDSTLPSPGATDDALAVAILLEAIRIFISRPVPLTHSIVFLFNDAEESLQDASHMFITQSPLRDTIKCVVNLEACGTTGSEILFQATSNEMIKAYSHVPHPFGTVLADDVFRTGLILSDTDFRQFVQYGNLTGLDMAVVKNSYLYHTKKDLAPYISPGTPQNFGENILAILTYLVSPEADLNNMKSSGTVYFSVFNSLFFMYSKLTSKILNTLVGGLGILLTLRGSEGSFTVALIAQVISIAGIFVIPNIWAYILGNVLDCGMSWFRNEYWPLFIYLPAIFASLFFTESLFKRSEHLALRATIFIFSLLTFIPLPSAYLFTIIDFFMVFALFLNDKILAKPGTVHPLTYFIGSIGAMTVGFESAINLLEIFVPLTGRIGTDKVADNVVATVCVCGFNIYFPLMSPWIQRFRSRCCFRLGLLFSIFVVGFSSFILAKQDTYYDSLHPRRIFVQRMENITSNEVSLHIASADSAPGFDKLSSDLSSLLTDEPVVKTEMDDWNSDWDTVYPFSQFLGSYRIPLNDTVDVTTLPSIKFSNKVVKDNVVNVTVTVEHPGLIWTVVSFDADVLSWSLPEVPSTVRRHHVREVSAYGLDSYSFNMSYLEAPIYFDFVGVDGVGHYPSKASEGRDRASIQLCEKLTNDYLPDWTDTLCIGVVSGNFKLE.

Residues 1–14 (MVLVCASSSKCKRN) are Cytoplasmic-facing. Residues 15 to 35 (TFLQLAMVLFAVVMARIALYF) form a helical membrane-spanning segment. The Lumenal portion of the chain corresponds to 36–365 (HNHLDEPLVD…FNSLFFMYSK (330 aa)). A glycan (N-linked (GlcNAc...) asparagine) is linked at asparagine 146. Residues histidine 161 and aspartate 173 each coordinate Zn(2+). Glutamate 207 (proton acceptor) is an active-site residue. Residues glutamate 208 and glutamate 234 each contribute to the Zn(2+) site. Asparagine 291 carries an N-linked (GlcNAc...) asparagine glycan. Histidine 307 provides a ligand contact to Zn(2+). Residues 366 to 384 (LTSKILNTLVGGLGILLTL) traverse the membrane as a helical segment. Over 385 to 392 (RGSEGSFT) the chain is Cytoplasmic. The helical transmembrane segment at 393–413 (VALIAQVISIAGIFVIPNIWA) threads the bilayer. At 414–431 (YILGNVLDCGMSWFRNEY) the chain is on the lumenal side. Residues 432–452 (WPLFIYLPAIFASLFFTESLF) traverse the membrane as a helical segment. Topologically, residues 453 to 463 (KRSEHLALRAT) are cytoplasmic. The helical transmembrane segment at 464–484 (IFIFSLLTFIPLPSAYLFTII) threads the bilayer. Position 485 (aspartate 485) is a topological domain, lumenal. A helical transmembrane segment spans residues 486–506 (FFMVFALFLNDKILAKPGTVH). Over 507–514 (PLTYFIGS) the chain is Cytoplasmic. The helical transmembrane segment at 515–535 (IGAMTVGFESAINLLEIFVPL) threads the bilayer. At 536-547 (TGRIGTDKVADN) the chain is on the lumenal side. A helical transmembrane segment spans residues 548–568 (VVATVCVCGFNIYFPLMSPWI). The Cytoplasmic portion of the chain corresponds to 569 to 575 (QRFRSRC). The chain crosses the membrane as a helical span at residues 576–596 (CFRLGLLFSIFVVGFSSFILA). Over 597 to 822 (KQDTYYDSLH…GVVSGNFKLE (226 aa)) the chain is Lumenal. Residues asparagine 617, asparagine 682, asparagine 706, and asparagine 758 are each glycosylated (N-linked (GlcNAc...) asparagine).

Belongs to the peptidase M28 family. M28B subfamily. It depends on Zn(2+) as a cofactor.

Its subcellular location is the endoplasmic reticulum membrane. This is Putative endoplasmic reticulum metallopeptidase 1 from Schizosaccharomyces pombe (strain 972 / ATCC 24843) (Fission yeast).